A 558-amino-acid polypeptide reads, in one-letter code: uncharacterized protein (558 aa).

6 helical membrane-spanning segments follow: residues 63 to 83 (LTGI…PSIY), 90 to 110 (VTFG…TYWI), 143 to 163 (VAAV…TLYG), 168 to 188 (VFVT…ATNC), 226 to 246 (SLGS…VLLV), and 258 to 278 (VLIL…ILAW). The region spanning 279 to 330 (LTAAPVRVVRAALKRVEQGDLRGDLVVFDGTELGELQRGFNAMVNGLRERER) is the HAMP domain. The Guanylate cyclase domain occupies 362–486 (AVVFVDIVGS…KPVNQAARLC (125 aa)). The segment at 529-558 (TQLASPHRRPPGSIHLTAEHAEEIRTDRLG) is disordered. The span at 545 to 558 (TAEHAEEIRTDRLG) shows a compositional bias: basic and acidic residues.

This sequence belongs to the adenylyl cyclase class-3 family.

The protein localises to the cell membrane. This is an uncharacterized protein from Mycobacterium tuberculosis (strain CDC 1551 / Oshkosh).